Here is a 149-residue protein sequence, read N- to C-terminus: Probable conjugal transfer protein TrbE part 1 (149 aa).

The protein belongs to the TrbE/VirB4 family.

The protein is Probable conjugal transfer protein TrbE part 1 (trbEA) of Sinorhizobium fredii (strain NBRC 101917 / NGR234).